The primary structure comprises 236 residues: Small ribosomal subunit protein uS2c (236 aa).

This sequence belongs to the universal ribosomal protein uS2 family.

Its subcellular location is the plastid. It is found in the chloroplast. This chain is Small ribosomal subunit protein uS2c (rps2), found in Nandina domestica (Heavenly bamboo).